The sequence spans 126 residues: Fluoride-specific ion channel FluC (126 aa).

The next 4 membrane-spanning stretches (helical) occupy residues 3–23, 37–57, 68–88, and 101–121; these read PYLL…RFLI, VGTL…ALYF, LVIT…LETV, and TNIT…MMLF. Positions 75 and 78 each coordinate Na(+).

It belongs to the fluoride channel Fluc/FEX (TC 1.A.43) family.

The protein localises to the cell inner membrane. It catalyses the reaction fluoride(in) = fluoride(out). With respect to regulation, na(+) is not transported, but it plays an essential structural role and its presence is essential for fluoride channel function. Functionally, fluoride-specific ion channel. Important for reducing fluoride concentration in the cell, thus reducing its toxicity. In Sulfurovum sp. (strain NBC37-1), this protein is Fluoride-specific ion channel FluC.